Consider the following 256-residue polypeptide: MLAKRIIPCLDVDNGRVVKGVNFVEIRDAGDPVEIARRYDAEGADEITFLDITASHDERETMVHVVEQVATEVFIPLTVGGGIRRMEDIRRLLNAGADKVSINTAAVFNPDFVREAADKVGSQCIVVAIDAKRVSGPGEADRWEIFTHGGRKPTGLDAVDWARRMVECGAGEILLTSMDRDGTKSGFDIELTRAVSDAVRVPVIASGGVGTLQHLVDGVTRGHADAVLAASIFHFGQHTVGEAKQFMAEQGVEVRL.

Active-site residues include Asp-11 and Asp-130.

The protein belongs to the HisA/HisF family. Heterodimer of HisH and HisF.

The protein localises to the cytoplasm. It carries out the reaction 5-[(5-phospho-1-deoxy-D-ribulos-1-ylimino)methylamino]-1-(5-phospho-beta-D-ribosyl)imidazole-4-carboxamide + L-glutamine = D-erythro-1-(imidazol-4-yl)glycerol 3-phosphate + 5-amino-1-(5-phospho-beta-D-ribosyl)imidazole-4-carboxamide + L-glutamate + H(+). The protein operates within amino-acid biosynthesis; L-histidine biosynthesis; L-histidine from 5-phospho-alpha-D-ribose 1-diphosphate: step 5/9. In terms of biological role, IGPS catalyzes the conversion of PRFAR and glutamine to IGP, AICAR and glutamate. The HisF subunit catalyzes the cyclization activity that produces IGP and AICAR from PRFAR using the ammonia provided by the HisH subunit. The protein is Imidazole glycerol phosphate synthase subunit HisF of Thioalkalivibrio sulfidiphilus (strain HL-EbGR7).